The primary structure comprises 432 residues: Trigger factor (432 aa).

Positions E161 to P246 constitute a PPIase FKBP-type domain.

The protein belongs to the FKBP-type PPIase family. Tig subfamily. As to quaternary structure, homodimer and monomer. In vivo most of the ribosomes are in complex with monomeric TF. Uncomplexed TF, however, is in a monomer-dimer equilibrium with approximately two thirds of TF existing in a dimeric state.

It is found in the cytoplasm. It catalyses the reaction [protein]-peptidylproline (omega=180) = [protein]-peptidylproline (omega=0). In terms of biological role, involved in protein export. Acts as a chaperone by maintaining the newly synthesized protein in an open conformation. Functions as a peptidyl-prolyl cis-trans isomerase. This is Trigger factor from Shigella boydii serotype 18 (strain CDC 3083-94 / BS512).